An 874-amino-acid polypeptide reads, in one-letter code: Alanine--tRNA ligase (874 aa).

Residues H559, H563, C661, and H665 each contribute to the Zn(2+) site.

Belongs to the class-II aminoacyl-tRNA synthetase family. Requires Zn(2+) as cofactor.

It localises to the cytoplasm. The enzyme catalyses tRNA(Ala) + L-alanine + ATP = L-alanyl-tRNA(Ala) + AMP + diphosphate. Its function is as follows. Catalyzes the attachment of alanine to tRNA(Ala) in a two-step reaction: alanine is first activated by ATP to form Ala-AMP and then transferred to the acceptor end of tRNA(Ala). Also edits incorrectly charged Ser-tRNA(Ala) and Gly-tRNA(Ala) via its editing domain. The polypeptide is Alanine--tRNA ligase (Microcystis aeruginosa (strain NIES-843 / IAM M-2473)).